Consider the following 333-residue polypeptide: Phosphate acyltransferase (333 aa).

It belongs to the PlsX family. In terms of assembly, homodimer. Probably interacts with PlsY.

The protein resides in the cytoplasm. The enzyme catalyses a fatty acyl-[ACP] + phosphate = an acyl phosphate + holo-[ACP]. Its pathway is lipid metabolism; phospholipid metabolism. Catalyzes the reversible formation of acyl-phosphate (acyl-PO(4)) from acyl-[acyl-carrier-protein] (acyl-ACP). This enzyme utilizes acyl-ACP as fatty acyl donor, but not acyl-CoA. The polypeptide is Phosphate acyltransferase (Lactobacillus helveticus (strain DPC 4571)).